A 345-amino-acid chain; its full sequence is N-acetyl-gamma-glutamyl-phosphate reductase (345 aa).

The active site involves C149.

The protein belongs to the NAGSA dehydrogenase family. Type 1 subfamily.

Its subcellular location is the cytoplasm. It catalyses the reaction N-acetyl-L-glutamate 5-semialdehyde + phosphate + NADP(+) = N-acetyl-L-glutamyl 5-phosphate + NADPH + H(+). It participates in amino-acid biosynthesis; L-arginine biosynthesis; N(2)-acetyl-L-ornithine from L-glutamate: step 3/4. Functionally, catalyzes the NADPH-dependent reduction of N-acetyl-5-glutamyl phosphate to yield N-acetyl-L-glutamate 5-semialdehyde. The polypeptide is N-acetyl-gamma-glutamyl-phosphate reductase (Bacillus cereus (strain AH187)).